We begin with the raw amino-acid sequence, 211 residues long: 3-demethoxyubiquinol 3-hydroxylase (211 aa).

The Fe cation site is built by glutamate 60, glutamate 90, histidine 93, glutamate 142, glutamate 174, and histidine 177.

This sequence belongs to the COQ7 family. Requires Fe cation as cofactor.

It localises to the cell membrane. It catalyses the reaction a 5-methoxy-2-methyl-3-(all-trans-polyprenyl)benzene-1,4-diol + AH2 + O2 = a 3-demethylubiquinol + A + H2O. It participates in cofactor biosynthesis; ubiquinone biosynthesis. Functionally, catalyzes the hydroxylation of 2-nonaprenyl-3-methyl-6-methoxy-1,4-benzoquinol during ubiquinone biosynthesis. The protein is 3-demethoxyubiquinol 3-hydroxylase of Acinetobacter baylyi (strain ATCC 33305 / BD413 / ADP1).